We begin with the raw amino-acid sequence, 375 residues long: Probable G-protein coupled receptor 27 (375 aa).

Topologically, residues 1–23 (MANASEPGGSGGGEAAALGLKLA) are extracellular. Residue Asn3 is glycosylated (N-linked (GlcNAc...) asparagine). The helical transmembrane segment at 24–44 (TLSLLLCVSLAGNVLFALLIV) threads the bilayer. Residues 45–55 (RERSLHRAPYY) lie on the Cytoplasmic side of the membrane. A helical membrane pass occupies residues 56 to 76 (LLLDLCLADGLRALACLPAVM). At 77–97 (LAARRAAAAAGAPPGALGCKL) the chain is on the extracellular side. A disulfide bond links Cys95 and Cys171. Residues 98-118 (LAFLAALFCFHAAFLLLGVGV) form a helical membrane-spanning segment. The Cytoplasmic portion of the chain corresponds to 119–139 (TRYLAIAHHRFYAERLAGWPC). Residues 140–160 (AAMLVCAAWALALAAAFPPVL) form a helical membrane-spanning segment. Topologically, residues 161-181 (DGGGDDEDAPCALEQRPDGAP) are extracellular. The chain crosses the membrane as a helical span at residues 182–202 (GALGFLLLLAVVVGATHLVYL). At 203–285 (RLLFFIHDRR…FKTEKRLCKM (83 aa)) the chain is on the cytoplasmic side. Residues 286-306 (FYAVTLLFLLLWGPYVVASYL) traverse the membrane as a helical segment. Residues 307 to 320 (RVLVRPGAVPQAYL) are Extracellular-facing. The helical transmembrane segment at 321–341 (TASVWLTFAQAGINPVVCFLF) threads the bilayer. Residues 342-375 (NRELRDCFRAQFPCCQSPRTTQATHPCDLKGIGL) lie on the Cytoplasmic side of the membrane.

This sequence belongs to the G-protein coupled receptor 1 family. As to expression, highly expressed as a 3.0 kb transcript in brain, ovary, testis, heart, prostate and peripheral Leukocytes. Lower levels in pancreas and small intestine. A 2.3 kb transcript was also found in peripheral Leukocytes. In brain regions, detected as a 3.0 kb transcript in all regions tested. Highest levels in the caudate nucleus, putamen, hippocampus and subthalamic nucleus. Lowest level in the cerebellum.

It localises to the cell membrane. Its function is as follows. Orphan receptor. Possible candidate for amine-like G-protein coupled receptor. The protein is Probable G-protein coupled receptor 27 (GPR27) of Homo sapiens (Human).